The primary structure comprises 238 residues: Probable transglycosylase SceD 1 (238 aa).

The signal sequence occupies residues 1-27 (MKKTVVASTLAVGLGVTGFAAGNSADA). The span at 87 to 97 (TNAPAQETAEQ) shows a compositional bias: polar residues. The segment at 87 to 161 (TNAPAQETAE…SEASEGSSVN (75 aa)) is disordered. Over residues 102-156 (EQPQQTEQASTEQPAQEAAPQTEETQQPQQEATTQTTSSSNESTSNESSSSEASE) the composition is skewed to low complexity.

This sequence belongs to the transglycosylase family. SceD subfamily.

It is found in the secreted. Functionally, is able to cleave peptidoglycan and affects clumping and separation of bacterial cells. The sequence is that of Probable transglycosylase SceD 1 (sceD1) from Staphylococcus saprophyticus subsp. saprophyticus (strain ATCC 15305 / DSM 20229 / NCIMB 8711 / NCTC 7292 / S-41).